Here is a 143-residue protein sequence, read N- to C-terminus: Large ribosomal subunit protein uL11 (143 aa).

Belongs to the universal ribosomal protein uL11 family. In terms of assembly, part of the ribosomal stalk of the 50S ribosomal subunit. Interacts with L10 and the large rRNA to form the base of the stalk. L10 forms an elongated spine to which L12 dimers bind in a sequential fashion forming a multimeric L10(L12)X complex. In terms of processing, one or more lysine residues are methylated.

Forms part of the ribosomal stalk which helps the ribosome interact with GTP-bound translation factors. The protein is Large ribosomal subunit protein uL11 of Ectopseudomonas mendocina (strain ymp) (Pseudomonas mendocina).